The following is a 365-amino-acid chain: tRNA/tmRNA (uracil-C(5))-methyltransferase (365 aa).

Positions 189, 217, 222, 238, and 298 each coordinate S-adenosyl-L-methionine. The active-site Nucleophile is Cys323. The Proton acceptor role is filled by Glu357.

This sequence belongs to the class I-like SAM-binding methyltransferase superfamily. RNA M5U methyltransferase family. TrmA subfamily.

It catalyses the reaction uridine(54) in tRNA + S-adenosyl-L-methionine = 5-methyluridine(54) in tRNA + S-adenosyl-L-homocysteine + H(+). The enzyme catalyses uridine(341) in tmRNA + S-adenosyl-L-methionine = 5-methyluridine(341) in tmRNA + S-adenosyl-L-homocysteine + H(+). Dual-specificity methyltransferase that catalyzes the formation of 5-methyluridine at position 54 (m5U54) in all tRNAs, and that of position 341 (m5U341) in tmRNA (transfer-mRNA). The chain is tRNA/tmRNA (uracil-C(5))-methyltransferase from Shewanella frigidimarina (strain NCIMB 400).